Reading from the N-terminus, the 235-residue chain is Uridylate kinase (235 aa).

An ATP-binding site is contributed by 10–11; the sequence is GS. Gly-45 provides a ligand contact to UMP. Residues Gly-46 and Arg-50 each coordinate ATP. UMP is bound by residues Asp-67 and 115-121; that span reads VTPGQTT. Residues Thr-141, Tyr-147, and Asp-150 each contribute to the ATP site.

The protein belongs to the UMP kinase family. As to quaternary structure, homohexamer.

The protein localises to the cytoplasm. The catalysed reaction is UMP + ATP = UDP + ADP. It participates in pyrimidine metabolism; CTP biosynthesis via de novo pathway; UDP from UMP (UMPK route): step 1/1. Its activity is regulated as follows. Inhibited by UTP. Catalyzes the reversible phosphorylation of UMP to UDP. This chain is Uridylate kinase, found in Methanocorpusculum labreanum (strain ATCC 43576 / DSM 4855 / Z).